The sequence spans 271 residues: tRNA pseudouridine synthase A (271 aa).

The active-site Nucleophile is Asp52. Tyr110 contributes to the substrate binding site.

It belongs to the tRNA pseudouridine synthase TruA family. Homodimer.

The enzyme catalyses uridine(38/39/40) in tRNA = pseudouridine(38/39/40) in tRNA. In terms of biological role, formation of pseudouridine at positions 38, 39 and 40 in the anticodon stem and loop of transfer RNAs. The chain is tRNA pseudouridine synthase A from Burkholderia mallei (strain NCTC 10247).